Here is a 471-residue protein sequence, read N- to C-terminus: Coagulation factor IX (471 aa).

Positions 1-19 are cleaved as a signal peptide; the sequence is MAKIPLILSFCLLEAFLGA. The propeptide occupies 20–39; the sequence is ESTVFIENKEASTVLSRTRR. In terms of domain architecture, Gla spans 40–85; that stretch reads GNSNRLEELIPGNLERECIEEKCSFEEAREVFENTEKTMEFWKIYI. Ca(2+) contacts are provided by Asn-41, Glu-46, Glu-47, Glu-54, Glu-56, Glu-59, Glu-60, Glu-65, Glu-66, and Glu-69. Residues Glu-46, Glu-47, Glu-54, Glu-56, Glu-59, Glu-60, Glu-65, Glu-66, Glu-69, Glu-72, Glu-75, and Glu-79 each carry the 4-carboxyglutamate modification. Position 54 (Glu-54) interacts with Mg(2+). A disulfide bridge connects residues Cys-57 and Cys-62. A Mg(2+)-binding site is contributed by Glu-59. Mg(2+) is bound at residue Glu-65. Glu-69 contributes to the Mg(2+) binding site. Residues Glu-75, Glu-79, Asp-86, Gly-87, and Gln-89 each coordinate Ca(2+). Glu-75 and Glu-79 together coordinate Mg(2+). Residues 86-122 enclose the EGF-like 1; calcium-binding domain; that stretch reads DGDQCNSNPCKNGAVCKDGVSSYECMCPPGYGGRNCE. Disulfide bonds link Cys-90–Cys-101, Cys-95–Cys-110, Cys-112–Cys-121, Cys-127–Cys-138, Cys-134–Cys-148, Cys-150–Cys-163, Cys-171–Cys-345, Cys-262–Cys-278, Cys-392–Cys-406, and Cys-417–Cys-445. Ser-92 is a glycosylation site (O-linked (Glc...) serine). Position 103 (Asp-103) interacts with Ca(2+). Residue Asp-103 is modified to (3R)-3-hydroxyaspartate. Position 107 is a phosphoserine (Ser-107). The 42-residue stretch at 123–164 folds into the EGF-like 2 domain; that stretch reads IDSTCATKNGGCEHFCRHDTPQKAVCSCASGYKLHEDGKSCK. Residues 186–235 constitute a propeptide, activation peptide; that stretch reads TENTIERWNITAHDEGDAHDEALDITEPPPPPTTSAAPAKIVPITKNDTR. Residues 236–469 form the Peptidase S1 domain; sequence VVGGYDSVKG…YVKWIRETTR (234 aa). Residue His-277 is the Charge relay system of the active site. Ca(2+) is bound by residues Glu-291, Asn-293, Glu-296, and Glu-301. Asp-325 (charge relay system) is an active-site residue. The active-site Charge relay system is the Ser-421.

This sequence belongs to the peptidase S1 family. In terms of assembly, heterodimer of a light chain and a heavy chain; disulfide-linked. Post-translationally, activated by factor XIa, which excises the activation peptide. The propeptide can also be removed by snake venom protease. Activated by coagulation factor VIIa-tissue factor (F7-F3) complex in calcium-dependent manner. In terms of processing, the iron and 2-oxoglutarate dependent 3-hydroxylation of aspartate and asparagine is (R) stereospecific within EGF domains.

The protein resides in the secreted. The catalysed reaction is Selective cleavage of Arg-|-Ile bond in factor X to form factor Xa.. In terms of biological role, factor IX is a vitamin K-dependent plasma protein that participates in the intrinsic pathway of blood coagulation by converting factor X to its active form in the presence of Ca(2+) ions, phospholipids, and factor VIIIa. The sequence is that of Coagulation factor IX (F9) from Gallus gallus (Chicken).